Consider the following 301-residue polypeptide: Glycine--tRNA ligase alpha subunit (301 aa).

This sequence belongs to the class-II aminoacyl-tRNA synthetase family. In terms of assembly, tetramer of two alpha and two beta subunits.

It is found in the cytoplasm. The enzyme catalyses tRNA(Gly) + glycine + ATP = glycyl-tRNA(Gly) + AMP + diphosphate. This Shewanella loihica (strain ATCC BAA-1088 / PV-4) protein is Glycine--tRNA ligase alpha subunit.